The chain runs to 510 residues: 2-isopropylmalate synthase (510 aa).

A Pyruvate carboxyltransferase domain is found at 5-267 (LVIFDTTLRD…DTRIDTTQIV (263 aa)). Positions 14, 202, 204, and 238 each coordinate Mn(2+). Positions 392–510 (RLLSLVAHSE…SSLERTHPQV (119 aa)) are regulatory domain.

The protein belongs to the alpha-IPM synthase/homocitrate synthase family. LeuA type 1 subfamily. As to quaternary structure, homodimer. Mn(2+) serves as cofactor.

The protein resides in the cytoplasm. It carries out the reaction 3-methyl-2-oxobutanoate + acetyl-CoA + H2O = (2S)-2-isopropylmalate + CoA + H(+). Its pathway is amino-acid biosynthesis; L-leucine biosynthesis; L-leucine from 3-methyl-2-oxobutanoate: step 1/4. Functionally, catalyzes the condensation of the acetyl group of acetyl-CoA with 3-methyl-2-oxobutanoate (2-ketoisovalerate) to form 3-carboxy-3-hydroxy-4-methylpentanoate (2-isopropylmalate). The protein is 2-isopropylmalate synthase of Nitrosomonas eutropha (strain DSM 101675 / C91 / Nm57).